The sequence spans 189 residues: Protein shisa-like-2A (189 aa).

2 helical membrane-spanning segments follow: residues 48–68 and 70–90; these read SFFPYEHNYMWWLSIGALVGL and TAAVVLLAFLITACVLCYLFI. The tract at residues 98 to 189 is disordered; sequence LDPGLSLQTT…PTPGPHGPVP (92 aa). Residues 140 to 171 show a composition bias toward polar residues; that stretch reads NTHLESNKKQTVSPTCLPQNQFMATVTASNIP.

This sequence belongs to the shisa family.

It localises to the membrane. The chain is Protein shisa-like-2A (Shisal2a) from Mus musculus (Mouse).